The primary structure comprises 1484 residues: Cystic fibrosis transmembrane conductance regulator (1484 aa).

Residues M1–F77 are Cytoplasmic-facing. The helical transmembrane segment at F78 to Q98 threads the bilayer. The ABC transmembrane type-1 1 domain maps to F81 to L365. Over P99–Y122 the chain is Extracellular. The helical transmembrane segment at L123–H146 threads the bilayer. The Cytoplasmic segment spans residues R147–L195. Residues A196–W216 traverse the membrane as a helical segment. The Extracellular portion of the chain corresponds to D217–S222. Residues A223 to M243 traverse the membrane as a helical segment. At M244–K298 the chain is on the cytoplasmic side. The chain crosses the membrane as a helical span at residues A299–F319. The Extracellular segment spans residues L320–T339. A helical membrane pass occupies residues I340–V358. Residues Q359 to S860 are Cytoplasmic-facing. ATP is bound by residues W401, S434, G458–T465, and Q493. The 224-residue stretch at N423–G646 folds into the ABC transporter 1 domain. Residue C524 is the site of S-palmitoyl cysteine attachment. S549 and S660 each carry phosphoserine. Positions S654 to E833 are disordered R region. S670 is subject to Phosphoserine; by PKA. Phosphoserine is present on S686. A Glycyl lysine isopeptide (Lys-Gly) (interchain with G-Cter in ubiquitin) cross-link involves residue K688. A phosphoserine mark is found at S700 and S712. T717 carries the phosphothreonine modification. S737, S769, S792, S797, and S815 each carry phosphoserine. Residues L861–V881 form a helical membrane-spanning segment. An ABC transmembrane type-1 2 domain is found at L861 to S1157. Residues V882–I920 are Extracellular-facing. N-linked (GlcNAc...) asparagine glycans are attached at residues N896 and N902. The discontinuously helical transmembrane segment at Y921 to H941 threads the bilayer. At T942–T992 the chain is on the cytoplasmic side. Residues I993 to L1013 traverse the membrane as a helical segment. Topologically, residues Q1014–P1015 are extracellular. The helical transmembrane segment at Y1016–L1036 threads the bilayer. The Cytoplasmic segment spans residues H1037 to T1097. A helical membrane pass occupies residues L1098–F1118. Topologically, residues I1119–G1132 are extracellular. A helical transmembrane segment spans residues I1133–I1153. Residues D1154–L1484 lie on the Cytoplasmic side of the membrane. Residues M1214–P1447 enclose the ABC transporter 2 domain. ATP-binding positions include Y1223 and G1248 to S1255. The segment at R1390 to L1484 is interaction with GORASP2. The S-palmitoyl cysteine moiety is linked to residue C1399. Residues S1448 and S1460 each carry the phosphoserine modification. Over residues H1456 to R1465 the composition is skewed to basic residues. The disordered stretch occupies residues H1456 to L1484. Positions E1474–L1484 are enriched in acidic residues. The PDZ-binding motif lies at T1482–L1484.

It belongs to the ABC transporter superfamily. ABCC family. CFTR transporter (TC 3.A.1.202) subfamily. Monomer; does not require oligomerization for channel activity. May form oligomers in the membrane. Interacts with SLC26A3, SLC26A6 and NHERF1. Interacts with SHANK2. Interacts with MYO6. Interacts (via C-terminus) with GOPC (via PDZ domain); this promotes CFTR internalization and thereby decreases channel activity. Interacts with SLC4A7 through NHERF1. Found in a complex with MYO5B and RAB11A. Interacts with ANO1. Interacts with SLC26A8. Interacts with AHCYL1; the interaction increases CFTR activity. Interacts with CSE1L. The core-glycosylated form interacts with GORASP2 (via PDZ GRASP-type 1 domain) in respone to ER stress. Interacts with MARCHF2; the interaction leads to CFTR ubiqtuitination and degradation. Interacts with ADGRG2. In terms of processing, N-glycosylated. Phosphorylated; cAMP treatment promotes phosphorylation and activates the channel. Dephosphorylation decreases the ATPase activity (in vitro). Phosphorylation at PKA sites activates the channel. Phosphorylation at PKC sites enhances the response to phosphorylation by PKA. Phosphorylated by AMPK; this inhibits channel activity. Post-translationally, ubiquitinated, leading to its degradation in the lysosome. Deubiquitination by USP10 in early endosomes enhances its endocytic recycling to the cell membrane. Ubiquitinated by RNF185 during ER stress. Ubiquitinated by MARCHF2.

It localises to the apical cell membrane. It is found in the early endosome membrane. Its subcellular location is the cell membrane. The protein localises to the recycling endosome membrane. The protein resides in the endoplasmic reticulum membrane. It localises to the nucleus. The enzyme catalyses ATP + H2O + closed Cl(-) channel = ADP + phosphate + open Cl(-) channel.. The catalysed reaction is chloride(in) = chloride(out). It catalyses the reaction hydrogencarbonate(in) = hydrogencarbonate(out). It carries out the reaction ATP + H2O = ADP + phosphate + H(+). Functionally, epithelial ion channel that plays an important role in the regulation of epithelial ion and water transport and fluid homeostasis. Mediates the transport of chloride ions across the cell membrane. Possesses an intrinsic ATPase activity and utilizes ATP to gate its channel; the passive flow of anions through the channel is gated by cycles of ATP binding and hydrolysis by the ATP-binding domains. The ion channel is also permeable to HCO(3)(-); selectivity depends on the extracellular chloride concentration. Exerts its function also by modulating the activity of other ion channels and transporters. Contributes to the regulation of the pH and the ion content of the epithelial fluid layer. Modulates the activity of the epithelial sodium channel (ENaC) complex, in part by regulating the cell surface expression of the ENaC complex. May regulate bicarbonate secretion and salvage in epithelial cells by regulating the transporter SLC4A7. Can inhibit the chloride channel activity of ANO1. Plays a role in the chloride and bicarbonate homeostasis during sperm epididymal maturation and capacitation. The chain is Cystic fibrosis transmembrane conductance regulator from Mustela putorius furo (European domestic ferret).